Consider the following 218-residue polypeptide: dTTP/UTP pyrophosphatase (218 aa).

D76 functions as the Proton acceptor in the catalytic mechanism.

The protein belongs to the Maf family. YhdE subfamily. It depends on a divalent metal cation as a cofactor.

Its subcellular location is the cytoplasm. The catalysed reaction is dTTP + H2O = dTMP + diphosphate + H(+). The enzyme catalyses UTP + H2O = UMP + diphosphate + H(+). In terms of biological role, nucleoside triphosphate pyrophosphatase that hydrolyzes dTTP and UTP. May have a dual role in cell division arrest and in preventing the incorporation of modified nucleotides into cellular nucleic acids. The chain is dTTP/UTP pyrophosphatase from Cytophaga hutchinsonii (strain ATCC 33406 / DSM 1761 / CIP 103989 / NBRC 15051 / NCIMB 9469 / D465).